The primary structure comprises 478 residues: tRNA modification GTPase MnmE (478 aa).

Residues Arg-36, Glu-94, and Lys-133 each contribute to the (6S)-5-formyl-5,6,7,8-tetrahydrofolate site. The TrmE-type G domain occupies 230–402 (GIHVVLAGRP…LVETLCAKVG (173 aa)). Asn-240 provides a ligand contact to K(+). GTP contacts are provided by residues 240-245 (NAGKSS), 259-265 (TDVAGTT), and 284-287 (DTAG). Ser-244 serves as a coordination point for Mg(2+). K(+) is bound by residues Thr-259, Val-261, and Thr-264. Thr-265 provides a ligand contact to Mg(2+). Lys-478 is a (6S)-5-formyl-5,6,7,8-tetrahydrofolate binding site.

This sequence belongs to the TRAFAC class TrmE-Era-EngA-EngB-Septin-like GTPase superfamily. TrmE GTPase family. Homodimer. Heterotetramer of two MnmE and two MnmG subunits. Requires K(+) as cofactor.

The protein resides in the cytoplasm. Exhibits a very high intrinsic GTPase hydrolysis rate. Involved in the addition of a carboxymethylaminomethyl (cmnm) group at the wobble position (U34) of certain tRNAs, forming tRNA-cmnm(5)s(2)U34. In Psychrobacter arcticus (strain DSM 17307 / VKM B-2377 / 273-4), this protein is tRNA modification GTPase MnmE.